The following is a 152-amino-acid chain: SsrA-binding protein (152 aa).

It belongs to the SmpB family.

The protein localises to the cytoplasm. In terms of biological role, required for rescue of stalled ribosomes mediated by trans-translation. Binds to transfer-messenger RNA (tmRNA), required for stable association of tmRNA with ribosomes. tmRNA and SmpB together mimic tRNA shape, replacing the anticodon stem-loop with SmpB. tmRNA is encoded by the ssrA gene; the 2 termini fold to resemble tRNA(Ala) and it encodes a 'tag peptide', a short internal open reading frame. During trans-translation Ala-aminoacylated tmRNA acts like a tRNA, entering the A-site of stalled ribosomes, displacing the stalled mRNA. The ribosome then switches to translate the ORF on the tmRNA; the nascent peptide is terminated with the 'tag peptide' encoded by the tmRNA and targeted for degradation. The ribosome is freed to recommence translation, which seems to be the essential function of trans-translation. The chain is SsrA-binding protein from Rickettsia prowazekii (strain Madrid E).